The chain runs to 308 residues: Glucan 1,3-beta-glucosidase BGL2 (308 aa).

The first 18 residues, 1 to 18 (MQIKFLTTLATVLTSVAA), serve as a signal peptide directing secretion. Glutamate 119 (proton donor) is an active-site residue. Asparagine 197 is a glycosylation site (N-linked (GlcNAc...) asparagine). Catalysis depends on glutamate 228, which acts as the Nucleophile.

It belongs to the glycosyl hydrolase 17 family.

The protein localises to the secreted. The protein resides in the cell wall. It localises to the cytoplasm. It catalyses the reaction Successive hydrolysis of beta-D-glucose units from the non-reducing ends of (1-&gt;3)-beta-D-glucans, releasing alpha-glucose.. Cell wall glucan 1,3-beta-glucosidase involved in cell wall biosynthesis and virulence. Crucial for delivery of beta-1,3-glucan to the biofilm matrix and for accumulation of mature matrix biomass. Plays a role as a major antigen in human systemic candidiasis patients. This chain is Glucan 1,3-beta-glucosidase BGL2 (BGL2), found in Candida albicans (strain SC5314 / ATCC MYA-2876) (Yeast).